A 385-amino-acid polypeptide reads, in one-letter code: MKLHEHQAKEIFAKYGIPVPEGKVAFSLKEAKEVAEELGEFPLVVKAQIHCGGRGKAGGVKIVKDMDELEKAVESLLGKVLKTFQCPDGKPVNRVLIEKATNIDKEYYLAITLDRSKSKPVIMASAAGGMEIEEIVKENPEAIIIETIDPELGLMPYQARELAFKLNLPVKEFASIALKLYQIYSDLDASLVEINPLVLTKEGNLIALDAKLDIDDNALFRHKDLEEMEDETQLPQLEVEAKKYGLNYIKLNGNIGCMVNGAGLAMATMDIIKLAGGEPANFLDVGGGANVEQIANAFRILMADPDVKAVFINIFGGILRVDRLAQGLIEASKMVELRVPIVARLEGTNVEEGKRMLQESGLNFIIAEDMWDGAKKAVEIANKQS.

The 232-residue stretch at 9–240 (KEIFAKYGIP…ETQLPQLEVE (232 aa)) folds into the ATP-grasp domain. Residues K46, 53–55 (GRG), E98, T101, and E106 each bind ATP. Residues N195 and D209 each coordinate Mg(2+). Substrate is bound by residues N260 and 317-319 (GIL).

It belongs to the succinate/malate CoA ligase beta subunit family. Heterotetramer of two alpha and two beta subunits. It depends on Mg(2+) as a cofactor.

The enzyme catalyses succinate + ATP + CoA = succinyl-CoA + ADP + phosphate. It carries out the reaction GTP + succinate + CoA = succinyl-CoA + GDP + phosphate. It functions in the pathway carbohydrate metabolism; tricarboxylic acid cycle; succinate from succinyl-CoA (ligase route): step 1/1. Its function is as follows. Succinyl-CoA synthetase functions in the citric acid cycle (TCA), coupling the hydrolysis of succinyl-CoA to the synthesis of either ATP or GTP and thus represents the only step of substrate-level phosphorylation in the TCA. The beta subunit provides nucleotide specificity of the enzyme and binds the substrate succinate, while the binding sites for coenzyme A and phosphate are found in the alpha subunit. In Aquifex aeolicus (strain VF5), this protein is Succinate--CoA ligase [ADP-forming] subunit beta.